The sequence spans 347 residues: NADH-ubiquinone oxidoreductase chain 2 (347 aa).

The next 10 membrane-spanning stretches (helical) occupy residues 13–33 (IFAGTLITALSSHWFFTWVGL), 56–76 (AIKYFLTQATASMILLMAILF), 96–116 (LMIMMAMAMKLGMAPFHFWVP), 123–143 (PLTSGLLLLTWQKLAPISIMY), 149–169 (LNVSLLLTLSILSIMAGSWGG), 178–198 (ILAYSSITHMGWMMAVLPYNP), 201–221 (TILNLTIYIILTTTAFLLLNL), 247–267 (TLLSLGGLPPLTGFLPKWAII), 274–294 (NSLIIPTIMATITLLNLYFYL), and 326–346 (LPTLIALTTLLLPISPFMLMI).

Belongs to the complex I subunit 2 family. As to quaternary structure, core subunit of respiratory chain NADH dehydrogenase (Complex I) which is composed of 45 different subunits. Interacts with TMEM242.

It localises to the mitochondrion inner membrane. The enzyme catalyses a ubiquinone + NADH + 5 H(+)(in) = a ubiquinol + NAD(+) + 4 H(+)(out). Core subunit of the mitochondrial membrane respiratory chain NADH dehydrogenase (Complex I) which catalyzes electron transfer from NADH through the respiratory chain, using ubiquinone as an electron acceptor. Essential for the catalytic activity and assembly of complex I. This Homo sapiens (Human) protein is NADH-ubiquinone oxidoreductase chain 2.